The sequence spans 314 residues: Olfactory receptor 5P51 (314 aa).

Residues 1–28 are Extracellular-facing; the sequence is MAFLEDGNHTAVTEFVLFGLTDDPVLRV. Asn-8 carries an N-linked (GlcNAc...) asparagine glycan. Residues 29–49 traverse the membrane as a helical segment; the sequence is ILFIIFLCIYLVNVSGNLSTI. Over 50-57 the chain is Cytoplasmic; sequence LLIRVSSQ. A helical transmembrane segment spans residues 58-78; sequence LHHPMYFFLSHLASVDVGYSS. Topologically, residues 79–102 are extracellular; the sequence is TVTPKMLANFLLERSTISYLGCTI. Cys-100 and Cys-192 are oxidised to a cystine. Residues 103-123 traverse the membrane as a helical segment; the sequence is QLFSGAFVGTLECFLLATMAY. The Cytoplasmic segment spans residues 124 to 136; sequence DRFIAICNPLLYS. A helical membrane pass occupies residues 137–157; it reads TKMSTQVCIQLLVGSYIGGFL. The Extracellular segment spans residues 158–199; sequence NASSFLLSFFPLLFCGPNRVNHYSCDLTPLIELSCSGSNVPI. Residues 200-220 traverse the membrane as a helical segment; the sequence is VPASFCSAFVIIVTVSVIAIS. Residues 221 to 240 lie on the Cytoplasmic side of the membrane; the sequence is YTYILITILKMRSTEGRQKA. A helical membrane pass occupies residues 241-261; sequence FSTCTSHLTAVTLYYGTVTFI. Topologically, residues 262 to 274 are extracellular; the sequence is YVMPKSSYSTDQN. Residues 275–295 form a helical membrane-spanning segment; that stretch reads KVVSVFYTVVIPMLNPIIYSL. Over 296–314 the chain is Cytoplasmic; that stretch reads RNNEIKGALKRQLARKIFS.

It belongs to the G-protein coupled receptor 1 family.

The protein resides in the cell membrane. Its function is as follows. Potential odorant receptor. This is Olfactory receptor 5P51 from Mus musculus (Mouse).